A 1013-amino-acid chain; its full sequence is Lysosomal alpha-mannosidase (1013 aa).

The first 49 residues, 1-49 (MGTGPLTSGVRAGGGNTGWLWMSSCNLGSPVLPISFLFWLLLAAPGARA), serve as a signal peptide directing secretion. Disulfide bonds link Cys55/Cys358 and Cys268/Cys273. Positions 72, 74, and 196 each coordinate Zn(2+). Asp196 (nucleophile) is an active-site residue. Asn310, Asn345, and Asn367 each carry an N-linked (GlcNAc...) asparagine glycan. An intrachain disulfide couples Cys412 to Cys472. His446 contacts Zn(2+). 8 N-linked (GlcNAc...) asparagine glycosylation sites follow: Asn489, Asn497, Asn544, Asn633, Asn646, Asn693, Asn767, and Asn931. The cysteines at positions 493 and 501 are disulfide-linked.

It belongs to the glycosyl hydrolase 38 family. Zn(2+) serves as cofactor.

The protein resides in the lysosome. It catalyses the reaction Hydrolysis of terminal, non-reducing alpha-D-mannose residues in alpha-D-mannosides.. Its function is as follows. Necessary for the catabolism of N-linked carbohydrates released during glycoprotein turnover. This chain is Lysosomal alpha-mannosidase (Man2b1), found in Mus musculus (Mouse).